A 216-amino-acid polypeptide reads, in one-letter code: Probable transaldolase (216 aa).

Lys-83 serves as the catalytic Schiff-base intermediate with substrate.

This sequence belongs to the transaldolase family. Type 3B subfamily.

It localises to the cytoplasm. It catalyses the reaction D-sedoheptulose 7-phosphate + D-glyceraldehyde 3-phosphate = D-erythrose 4-phosphate + beta-D-fructose 6-phosphate. The protein operates within carbohydrate degradation; pentose phosphate pathway; D-glyceraldehyde 3-phosphate and beta-D-fructose 6-phosphate from D-ribose 5-phosphate and D-xylulose 5-phosphate (non-oxidative stage): step 2/3. Functionally, transaldolase is important for the balance of metabolites in the pentose-phosphate pathway. The chain is Probable transaldolase from Hyphomonas neptunium (strain ATCC 15444).